A 299-amino-acid polypeptide reads, in one-letter code: Probable alpha-L-glutamate ligase (299 aa).

The region spanning 112–294 (LQLLTEQGIA…IALQMIVHIE (183 aa)) is the ATP-grasp domain. ATP-binding positions include Lys-148, 185–186 (DF), Asp-194, and 218–220 (RAN). Mg(2+) contacts are provided by Asp-255, Glu-267, and Asn-269. Mn(2+) is bound by residues Asp-255, Glu-267, and Asn-269.

Belongs to the RimK family. It depends on Mg(2+) as a cofactor. Mn(2+) is required as a cofactor.

This chain is Probable alpha-L-glutamate ligase, found in Histophilus somni (strain 129Pt) (Haemophilus somnus).